The following is a 137-amino-acid chain: Large ribosomal subunit protein uL16 (137 aa).

The protein belongs to the universal ribosomal protein uL16 family. As to quaternary structure, part of the 50S ribosomal subunit.

Functionally, binds 23S rRNA and is also seen to make contacts with the A and possibly P site tRNAs. The protein is Large ribosomal subunit protein uL16 of Mesorhizobium japonicum (strain LMG 29417 / CECT 9101 / MAFF 303099) (Mesorhizobium loti (strain MAFF 303099)).